Reading from the N-terminus, the 309-residue chain is Diacylglycerol kinase (309 aa).

Positions 9–140 (HEIGKVTALT…IDLGRIQDDN (132 aa)) constitute a DAGKc domain. Residues 19-23 (NPLSG), 76-82 (GDGVVSN), and Thr-101 each bind ATP. Positions 226, 229, and 231 each coordinate Mg(2+). The Proton acceptor role is filled by Asp-285.

Belongs to the diacylglycerol/lipid kinase family. Requires Mg(2+) as cofactor.

The protein localises to the secreted. The protein resides in the cell wall. The enzyme catalyses a 1,2-diacyl-sn-glycerol + ATP = a 1,2-diacyl-sn-glycero-3-phosphate + ADP + H(+). The catalysed reaction is N-hexadecanoylsphing-4-enine + ATP = N-(hexadecanoyl)-sphing-4-enine-1-phosphate + ADP + H(+). Catalyzes the phosphorylation of diacylglycerol (DAG) into phosphatidic acid. Is involved in the biosynthesis of phosphatidylinositol mannosides (PIMs), probably via a role in the biosynthesis of phosphatidylinositol (PI), a PIM precursor, which is derived from phosphatidic acid. Is also able to phosphorylate other various amphipathic lipids of host and bacterial origin in vitro, such as ceramide. The sequence is that of Diacylglycerol kinase (dagK) from Mycobacterium tuberculosis (strain CDC 1551 / Oshkosh).